Consider the following 202-residue polypeptide: Holliday junction branch migration complex subunit RuvA (202 aa).

A domain I region spans residues 1-64 (MIDYVSGTLV…EDDESLYGFA (64 aa)). The interval 65–143 (TKAERTVFET…DLDVLEDTSP (79 aa)) is domain II. The tract at residues 144–149 (LSGGSD) is flexible linker. The interval 150–202 (ARAEARADALEALTELGLSKADAERSIRQVLRDNAGIQSADELVRRALKADQE) is domain III.

Belongs to the RuvA family. Homotetramer. Forms an RuvA(8)-RuvB(12)-Holliday junction (HJ) complex. HJ DNA is sandwiched between 2 RuvA tetramers; dsDNA enters through RuvA and exits via RuvB. An RuvB hexamer assembles on each DNA strand where it exits the tetramer. Each RuvB hexamer is contacted by two RuvA subunits (via domain III) on 2 adjacent RuvB subunits; this complex drives branch migration. In the full resolvosome a probable DNA-RuvA(4)-RuvB(12)-RuvC(2) complex forms which resolves the HJ.

It is found in the cytoplasm. In terms of biological role, the RuvA-RuvB-RuvC complex processes Holliday junction (HJ) DNA during genetic recombination and DNA repair, while the RuvA-RuvB complex plays an important role in the rescue of blocked DNA replication forks via replication fork reversal (RFR). RuvA specifically binds to HJ cruciform DNA, conferring on it an open structure. The RuvB hexamer acts as an ATP-dependent pump, pulling dsDNA into and through the RuvAB complex. HJ branch migration allows RuvC to scan DNA until it finds its consensus sequence, where it cleaves and resolves the cruciform DNA. The protein is Holliday junction branch migration complex subunit RuvA of Salinibacter ruber (strain DSM 13855 / M31).